Reading from the N-terminus, the 152-residue chain is UPF0266 membrane protein YobD (152 aa).

3 consecutive transmembrane segments (helical) span residues 6–26 (LVLI…QFIM), 45–65 (VDSV…VTSH), and 67–87 (AQMT…IFWI).

It belongs to the UPF0266 family.

The protein localises to the cell inner membrane. The protein is UPF0266 membrane protein YobD of Salmonella choleraesuis (strain SC-B67).